The following is a 455-amino-acid chain: Gametocyte surface protein P45/48 (455 aa).

The first 30 residues, 1-30 (MLYFFGNSRFFLFFFYFFFYFVLVIKSSVG), serve as a signal peptide directing secretion. The 6-Cys 1 domain maps to 48 to 186 (LGYKCDFSTE…ALVHVTVLKY (139 aa)). 2 cysteine pairs are disulfide-bonded: Cys-52/Cys-74 and Cys-106/Cys-160. Residues Asn-135, Asn-194, Asn-275, and Asn-307 are each glycosylated (N-linked (GlcNAc...) asparagine). A 6-Cys 2 domain is found at 302 to 433 (VIYGCNFSKD…ITGFMNIKIG (132 aa)). 3 cysteine pairs are disulfide-bonded: Cys-306/Cys-334, Cys-351/Cys-419, and Cys-359/Cys-417. Gly-433 is lipidated: GPI-anchor amidated glycine. Residues 434-455 (SAYYAFLSKLFIIFIPLFFMWL) constitute a propeptide, removed in mature form.

In terms of assembly, heterodimer; heterodimerizes with PF230.

It is found in the cell surface. The protein resides in the cell membrane. Gametocyte surface protein required for male fertility. The protein is Gametocyte surface protein P45/48 (PB45/48) of Plasmodium berghei (strain Anka).